Consider the following 243-residue polypeptide: MSMLCYTLIIAFLIGIWAAPKSEDNVPLGSPATSDLSDTSCAQTHEGLKTSRNTDQRHPAPKKAEDQELGSVANIIVDPKLFQKRRFQSSRVLFSTQPPPLSRDEQSVEFLDNEDALNRNIRAKRETHPVHNRGEHSVCDSISVWVANKTNATDIKGNMVTVMVDVNLNNEVYKQYFFETKCRNPNPVPSGCRGIDSRHWNSYCTTTQAYVRALTMEGNRASWRFIRIDTACVCVIIRKTDNF.

The signal sequence occupies residues 1–18 (MSMLCYTLIIAFLIGIWA). Positions 19 to 125 (APKSEDNVPL…ALNRNIRAKR (107 aa)) are excised as a propeptide. Residues 47–66 (GLKTSRNTDQRHPAPKKAED) are compositionally biased toward basic and acidic residues. The interval 47-67 (GLKTSRNTDQRHPAPKKAEDQ) is disordered. 3 disulfides stabilise this stretch: Cys139/Cys204, Cys182/Cys232, and Cys192/Cys234. N-linked (GlcNAc...) asparagine glycans are attached at residues Asn148 and Asn151.

The protein belongs to the NGF-beta family. Homodimer; non-covalently linked. Expressed by the venom gland.

It localises to the secreted. Functionally, nerve growth factor is important for the development and maintenance of the sympathetic and sensory nervous systems. It stimulates division and differentiation of sympathetic and embryonic sensory neurons as well as basal forebrain cholinergic neurons in the brain. Its relevance in the snake venom is not clear. However, it has been shown to inhibit metalloproteinase-dependent proteolysis of platelet glycoprotein Ib alpha, suggesting a metalloproteinase inhibition to prevent metalloprotease autodigestion and/or protection against prey proteases. Binds a lipid between the two protein chains in the homodimer. The lipid-bound form promotes histamine relase from mouse mast cells, contrary to the lipid-free form. This chain is Venom nerve growth factor 3, found in Tropidechis carinatus (Australian rough-scaled snake).